We begin with the raw amino-acid sequence, 470 residues long: Argininosuccinate lyase (470 aa).

It belongs to the lyase 1 family. Argininosuccinate lyase subfamily.

It localises to the cytoplasm. It carries out the reaction 2-(N(omega)-L-arginino)succinate = fumarate + L-arginine. It participates in amino-acid biosynthesis; L-arginine biosynthesis; L-arginine from L-ornithine and carbamoyl phosphate: step 3/3. The chain is Argininosuccinate lyase from Leptospira borgpetersenii serovar Hardjo-bovis (strain L550).